Here is a 1122-residue protein sequence, read N- to C-terminus: Adhesin P1 (1122 aa).

A signal peptide spans 1 to 26 (MKKLIFKLSVGITPLALIGLGSFGLA). Disordered stretches follow at residues 182–208 (ATGD…GGGA), 244–273 (DYNS…GGRT), and 541–562 (GALQ…SNGN). Residues 195–208 (AGGGSSSSAAGGGA) show a composition bias toward gly residues. Over residues 259–273 (LDSSESSESINGGRT) the composition is skewed to polar residues. A helical transmembrane segment spans residues 1001-1021 (AISIPIIIIALALALGLGIGI). A disordered region spans residues 1066–1122 (KTPQMLQANKKDGASSPSKPSAPAAKKPAGPTKPSAPGAKPTAPAKPKAPAPTKKIE). Low complexity predominate over residues 1079–1122 (ASSPSKPSAPAAKKPAGPTKPSAPGAKPTAPAKPKAPAPTKKIE).

Belongs to the adhesin P1 family.

It is found in the cell membrane. Its function is as follows. Could be involved in cytadherence. In Mycoplasmoides gallisepticum (strain R(low / passage 15 / clone 2)) (Mycoplasma gallisepticum), this protein is Adhesin P1 (gapA).